The sequence spans 384 residues: PqqA peptide cyclase (384 aa).

Positions 14–230 (IPAPVGLLAE…EAARERLKGQ (217 aa)) constitute a Radical SAM core domain. Residues C28, C32, and C35 each coordinate [4Fe-4S] cluster.

This sequence belongs to the radical SAM superfamily. PqqE family. In terms of assembly, interacts with PqqD. The interaction is necessary for activity of PqqE. [4Fe-4S] cluster is required as a cofactor.

The enzyme catalyses [PQQ precursor protein] + S-adenosyl-L-methionine = E-Y cross-linked-[PQQ precursor protein] + 5'-deoxyadenosine + L-methionine + H(+). Its pathway is cofactor biosynthesis; pyrroloquinoline quinone biosynthesis. In terms of biological role, catalyzes the cross-linking of a glutamate residue and a tyrosine residue in the PqqA protein as part of the biosynthesis of pyrroloquinoline quinone (PQQ). This is PqqA peptide cyclase from Methylorubrum extorquens (strain CM4 / NCIMB 13688) (Methylobacterium extorquens).